The following is a 1240-amino-acid chain: MRNCKGLSILLCFLLVFFAMPFPAVAEEAEAMPVSEASEWSFSAFGSNTSVEKNPDPMINSDGSVKIVANGGKIASNEQGISFYYREVPSDANFEIKAKAEVLNFKGDDKQVSFGLMLMDQIGQHRNSEKHNSNYIAVGALDTIIKAFYMQESLTKTDMLSQTPSQGDIFELSIKKSGDNYVLTCNGTTETFTLPGLFSDTIYVGIYAARNAEIKFSDLNFTLDTKDIVDLSVDLSGMKTSYLVDEPLNLKGLKVTAHYSDGTSEELTEEDYIVTGFDSSTPGTNTICINVGEISKTIDLEILPLTCTKLTVKYLPAKTDYYLGDSFNPEGLKVIAEYNDGYKVTELTEDKYALYIAGKAAEDYVFSKAGTQKVEVISRENPSVKTGFEVNISDASIESLEISRKPEKTAYFIGDEPDLTGLVVYARYSDGSKVRLDKSEYEVKGFDSSAPGEKEITVYHKGKTVAFSVVVKEKEVMGIEVTKYPKTTYYIGETFNAEGLEVSKVYDNGDREPLTDFSVDASAFDGSTPGVYDVIISADGFDPITLKVTVREKTEYEWKAIRFGQSTSDSKNYVNFLDNGAVEIVALEGGGKIATDHDGITFYYTEIDAKDNFVLSADIKVKEYAKNPHDGQESFGIMARDAIGTPGDSSIFASNIAAIGGFSGGTKSPNGTQLFIRTGVSSPDGAGSKGIRRIMIKDEKPGPDNTYPAAEYRLTLAKTNSGFVGKLNDGEEVIFYEPDILNVQDSKIYVGFFAARLATIEVSNIELYVSSSETDAPRYIPPEAPVTPSLQILSLDKTSNVNYSLVVKPNVNGSITVKQGAEILVRDVTVNAGEKYSVDAVLEKNSENPFTVIFIPDDTQNLSSYEKIIKNFSVTMRTYNEGGNIYVSPNGTPYGDGTKDNPLDLDTAIAFVKEGQKIILMNGVYKRDSALVISRYNDGTAENRKYLVAEPGSRPVIDFDKKGQGVTLSGNYWYIEGIDFARSAPNYPGFIIGGNYNIVENCRFYENGDTGLQISRTDSSENIAEWPSYNKIINCESFDNRDPSENNADGFAAKLTCGVGNMFIGCVSHHNIDDGWDLYTKAGTGAIGPVIIDSCIAYENGTLTDGTVGKGDKNGFKLGGEGVPVQHIIKNSIAFNNGAVGFTSNSNPSVIAINNIAYNNAKGNLVFTSYSGIETHFVVDGFVSYNTEGAPRDSATGVPASDDNYLFDGTKSVNKSGEELTEKEFIERLLELISKIKSIK.

The N-terminal stretch at 1-26 (MRNCKGLSILLCFLLVFFAMPFPAVA) is a signal peptide. Has catalytic activity regions lie at residues 27 to 551 (EEAE…VTVR) and 545 to 1240 (TLKV…KSIK). The Ca(2+) site is built by aspartate 325, glutamate 349, aspartate 350, aspartate 1049, aspartate 1073, aspartate 1074, and aspartate 1077. Lysine 1117 functions as the Proton acceptor in the catalytic mechanism.

This sequence belongs to the polysaccharide lyase 9 family. It depends on Ca(2+) as a cofactor.

Its subcellular location is the secreted. It carries out the reaction Eliminative cleavage of (1-&gt;4)-alpha-D-galacturonan to give oligosaccharides with 4-deoxy-alpha-D-galact-4-enuronosyl groups at their non-reducing ends.. Its activity is regulated as follows. Inhibited by the metal chelator ethylenediaminetetraacetic acid (EDTA). In terms of biological role, cleaves polygalacturonate or partially methylated pectin. When assayed on polygalacturonate or on pectin, it releases monogalacturonate as the principal product. In Thermoclostridium stercorarium (Clostridium stercorarium), this protein is Pectate lyase L.